The following is a 466-amino-acid chain: CBL-interacting protein kinase 20 (466 aa).

The Protein kinase domain maps to 12 to 276 (YELGRSLGHG…IDELVKHPWF (265 aa)). ATP is bound by residues 18–26 (LGHGTFSKV) and Lys41. Catalysis depends on Asp139, which acts as the Proton acceptor. Residues 162–191 (DFGLSALSASRRHDGLLHTTCGTPSYVAPE) are activation loop. The NAF domain occupies 297–329 (KPANAAMNMKPASLNAFDIISLSQGFDLSGMFC). The segment at 337–366 (TQDQLFVTGKPATAIVSRLEEIAETEHFTV) is PPI. A disordered region spans residues 446-466 (ASEKNQLPAVSEVSPLSSPRN).

It belongs to the protein kinase superfamily. CAMK Ser/Thr protein kinase family. SNF1 subfamily. It depends on Mn(2+) as a cofactor.

It carries out the reaction L-seryl-[protein] + ATP = O-phospho-L-seryl-[protein] + ADP + H(+). It catalyses the reaction L-threonyl-[protein] + ATP = O-phospho-L-threonyl-[protein] + ADP + H(+). Functionally, CIPK serine-threonine protein kinases interact with CBL proteins. Binding of a CBL protein to the regulatory NAF domain of CIPK protein lead to the activation of the kinase in a calcium-dependent manner. This chain is CBL-interacting protein kinase 20 (CIPK20), found in Oryza sativa subsp. japonica (Rice).